A 286-amino-acid polypeptide reads, in one-letter code: Pyridoxal kinase PdxY (286 aa).

Substrate-binding positions include Ser9 and 44–45; that span reads TQ. ATP is bound by residues Asp111, Ala143, Glu148, Lys181, and 208 to 211; that span reads RPLV. Asp222 lines the substrate pocket.

This sequence belongs to the pyridoxine kinase family. PdxY subfamily. As to quaternary structure, homodimer. The cofactor is Mg(2+).

It catalyses the reaction pyridoxal + ATP = pyridoxal 5'-phosphate + ADP + H(+). The protein operates within cofactor metabolism; pyridoxal 5'-phosphate salvage; pyridoxal 5'-phosphate from pyridoxal: step 1/1. Its function is as follows. Pyridoxal kinase involved in the salvage pathway of pyridoxal 5'-phosphate (PLP). Catalyzes the phosphorylation of pyridoxal to PLP. The polypeptide is Pyridoxal kinase PdxY (Pectobacterium atrosepticum (strain SCRI 1043 / ATCC BAA-672) (Erwinia carotovora subsp. atroseptica)).